We begin with the raw amino-acid sequence, 55 residues long: Large ribosomal subunit protein bL33 (55 aa).

This sequence belongs to the bacterial ribosomal protein bL33 family.

The sequence is that of Large ribosomal subunit protein bL33 from Roseobacter denitrificans (strain ATCC 33942 / OCh 114) (Erythrobacter sp. (strain OCh 114)).